A 361-amino-acid chain; its full sequence is Feruloyl CoA ortho-hydroxylase 1 (361 aa).

The 109-residue stretch at T204–P312 folds into the Fe2OG dioxygenase domain. Y220 serves as a coordination point for 2-oxoglutarate. 3 residues coordinate Fe cation: H235, D237, and H293. 2 residues coordinate 2-oxoglutarate: R303 and S305.

This sequence belongs to the iron/ascorbate-dependent oxidoreductase family. Requires L-ascorbate as cofactor. Fe(2+) is required as a cofactor. In terms of tissue distribution, highly expressed in roots, especially in the cortex.

The catalysed reaction is (E)-feruloyl-CoA + 2-oxoglutarate + O2 = (E)-6-hydroxyferuloyl-CoA + succinate + CO2. The enzyme catalyses (E)-6-hydroxyferuloyl-CoA = scopoletin + CoA. The protein operates within phenylpropanoid metabolism. Functionally, 2-oxoglutarate (OG)- and Fe(II)-dependent dioxygenase (2OGD) involved in scopoletin biosynthesis. Converts feruloyl CoA into 6'-hydroxyferuloyl CoA but has no activity with ferulic acid, feruloylquinic acid, caffeic acid, caffeoyl CoA, p-coumaric acid, cinnamic acid, cinnamoyl CoA or benzoyl CoA. Required for the production and secretion of compounds (e.g. fluorescent coumarins) that facilitate the mobilization and uptake of iron from sources with low bioavailability or in high pH-induced iron deficiency conditions. Involved in the pathway of sideretin biosynthesis from feruloyl CoA, a redox-active catecholic metabolite exuded by roots in response to iron deficiency in order to facilitate the uptake of iron; this pathway consists in the successive conversion from feruloyl CoA to scopoletin, from scopoletin to fraxetin and from fraxetin to sideretin. Catalyzes the biosynthesis of scopoletin from feruloyl CoA. This is Feruloyl CoA ortho-hydroxylase 1 from Arabidopsis thaliana (Mouse-ear cress).